Consider the following 616-residue polypeptide: Putative L-type lectin-domain containing receptor kinase I.10 (616 aa).

An N-terminal signal peptide occupies residues methionine 1–glutamine 22. Topologically, residues glutamine 23–leucine 288 are extracellular. A legume-lectin like region spans residues glutamate 24 to serine 258. Asparagine 56, asparagine 124, asparagine 181, asparagine 204, and asparagine 225 each carry an N-linked (GlcNAc...) asparagine glycan. A helical transmembrane segment spans residues phenylalanine 289–phenylalanine 309. The Cytoplasmic portion of the chain corresponds to phenylalanine 310–proline 616. In terms of domain architecture, Protein kinase spans phenylalanine 343 to proline 616. Residues leucine 349–valine 357 and lysine 371 contribute to the ATP site. The Proton acceptor role is filled by aspartate 467.

The protein in the C-terminal section; belongs to the protein kinase superfamily. Ser/Thr protein kinase family. It in the N-terminal section; belongs to the leguminous lectin family.

The protein resides in the cell membrane. It carries out the reaction L-seryl-[protein] + ATP = O-phospho-L-seryl-[protein] + ADP + H(+). It catalyses the reaction L-threonyl-[protein] + ATP = O-phospho-L-threonyl-[protein] + ADP + H(+). The polypeptide is Putative L-type lectin-domain containing receptor kinase I.10 (LECRK110) (Arabidopsis thaliana (Mouse-ear cress)).